Consider the following 145-residue polypeptide: Superoxide dismutase [Mn/Fe] (145 aa).

Fe(3+)-binding residues include His10 and His64. The Mn(2+) site is built by His10 and His64. Residues 126 to 145 (TSTANQDTPISEGKKPILGL) form a disordered region.

It belongs to the iron/manganese superoxide dismutase family. Mn(2+) is required as a cofactor. It depends on Fe(3+) as a cofactor.

It catalyses the reaction 2 superoxide + 2 H(+) = H2O2 + O2. Functionally, destroys superoxide anion radicals which are normally produced within the cells and which are toxic to biological systems. Catalyzes the dismutation of superoxide anion radicals into O2 and H2O2 by successive reduction and oxidation of the transition metal ion at the active site. The sequence is that of Superoxide dismutase [Mn/Fe] (sodA) from Streptococcus oralis.